We begin with the raw amino-acid sequence, 56 residues long: GSICLEPKKVGRCRGSFPRFYFDSETGKCTPFIYGGCGGNGNNFETLHACRAICRA.

Positions 4-54 (CLEPKKVGRCRGSFPRFYFDSETGKCTPFIYGGCGGNGNNFETLHACRAIC) constitute a BPTI/Kunitz inhibitor domain. 3 cysteine pairs are disulfide-bonded: cysteine 4-cysteine 54, cysteine 13-cysteine 37, and cysteine 29-cysteine 50.

The protein belongs to the venom Kunitz-type family. Sea anemone type 2 potassium channel toxin subfamily.

The protein localises to the secreted. Its subcellular location is the nematocyst. Functionally, this recombinant serine protease inhibitor inhibits trypsin (Ki=30 nM). It possesses anti-inflammatory activity in vitro. It blocks histamine influence on intracellular calcium concentration in murine bone marrow-derived macrophages (62.2% inhibition at 10 uM), which can indicate inhibition of H1-histamine receptor (HRH1). In contrast to some paralogs, this protein decreases reactive oxygen species (ROS) level in the oxidative stress agent 6-hydroxydopamine (6-OHDA)-induced neurotoxicity model, but does not show cytoprotective activity on neuroblastoma cells. In vivo, it shows analgesic activity, since it increases hot plate and tail flick withdrawal latencies, when using a mice thermal pain stimulation model. This is PI-stichotoxin-Hcr2n from Radianthus crispa (Leathery sea anemone).